A 211-amino-acid polypeptide reads, in one-letter code: Protein-L-isoaspartate O-methyltransferase (211 aa).

The active site involves Ser62.

The protein belongs to the methyltransferase superfamily. L-isoaspartyl/D-aspartyl protein methyltransferase family.

The protein localises to the cytoplasm. The catalysed reaction is [protein]-L-isoaspartate + S-adenosyl-L-methionine = [protein]-L-isoaspartate alpha-methyl ester + S-adenosyl-L-homocysteine. In terms of biological role, catalyzes the methyl esterification of L-isoaspartyl residues in peptides and proteins that result from spontaneous decomposition of normal L-aspartyl and L-asparaginyl residues. It plays a role in the repair and/or degradation of damaged proteins. The polypeptide is Protein-L-isoaspartate O-methyltransferase (Shewanella halifaxensis (strain HAW-EB4)).